The primary structure comprises 154 residues: 17 kDa surface antigen (154 aa).

Residues 1–19 (MKLLSKIMIIALAASMLQA) form the signal peptide. The N-palmitoyl cysteine moiety is linked to residue Cys20. Residue Cys20 is the site of S-diacylglycerol cysteine attachment.

It belongs to the rickettsiale 17 kDa surface antigen family.

The protein localises to the cell outer membrane. The sequence is that of 17 kDa surface antigen (omp) from Rickettsia australis.